Here is a 586-residue protein sequence, read N- to C-terminus: SPbeta prophage-derived uncharacterized protein YorA (586 aa).

PbH1 repeat units lie at residues 108–147 (AENV…HVHG), 148–170 (SKNV…WIAA), 184–206 (SKSV…ATNG), 207–235 (CEGL…DLEG), 246–268 (PYEL…TAHT), 288–313 (STDV…DSVG), 320–341 (GNRI…MIRG), 364–384 (AEDV…QIQV), 387–410 (SSDI…KVMD), 411–432 (SNDV…YCER), 435–456 (AVRI…YWDK), 481–504 (MYNI…HLIG), and 505–531 (GSEH…YLNG).

This Bacillus subtilis (strain 168) protein is SPbeta prophage-derived uncharacterized protein YorA (yorA).